We begin with the raw amino-acid sequence, 265 residues long: Hydroxyethylthiazole kinase (265 aa).

A substrate-binding site is contributed by Met-50. ATP-binding residues include Arg-125 and Thr-171. A substrate-binding site is contributed by Gly-198.

Belongs to the Thz kinase family. Requires Mg(2+) as cofactor.

It catalyses the reaction 5-(2-hydroxyethyl)-4-methylthiazole + ATP = 4-methyl-5-(2-phosphooxyethyl)-thiazole + ADP + H(+). It participates in cofactor biosynthesis; thiamine diphosphate biosynthesis; 4-methyl-5-(2-phosphoethyl)-thiazole from 5-(2-hydroxyethyl)-4-methylthiazole: step 1/1. Functionally, catalyzes the phosphorylation of the hydroxyl group of 4-methyl-5-beta-hydroxyethylthiazole (THZ). The protein is Hydroxyethylthiazole kinase of Salmonella newport (strain SL254).